A 73-amino-acid chain; its full sequence is Antitoxin VapB2 (73 aa).

As to quaternary structure, forms a homodimer, which binds to a toxin homodimer, which then oligomerizes further to a hetero-octamer. When bound to toxin VapC2 the toxin activity is inhibited; 1 antitoxin may suffice to inhibit toxin.

Antitoxin component of a type II toxin-antitoxin (TA) system. Upon expression in M.smegmatis neutralizes the effect of cognate toxin VapC2. The C-terminal helix of the antitoxin may obstruct the toxin's RNA-binding groove, blocking access to the active sites. Additionally, the C-terminal arginine of the antitoxin may remove Mg(2+) ions from the toxin active sites. The sequence is that of Antitoxin VapB2 (vapB2) from Mycobacterium tuberculosis (strain ATCC 25618 / H37Rv).